We begin with the raw amino-acid sequence, 443 residues long: uncharacterized protein (443 aa).

Active-site proton acceptor residues include His164 and Asp386.

Belongs to the plant acyltransferase family.

This is an uncharacterized protein from Arabidopsis thaliana (Mouse-ear cress).